The sequence spans 162 residues: Ribosome maturation factor RimP (162 aa).

Belongs to the RimP family.

It is found in the cytoplasm. Functionally, required for maturation of 30S ribosomal subunits. The chain is Ribosome maturation factor RimP from Leptospira interrogans serogroup Icterohaemorrhagiae serovar copenhageni (strain Fiocruz L1-130).